The sequence spans 480 residues: MSRKLSHLIATRKSKTIVVTVLLIYSLLTFHLSNKRLLSQFYPSKDDFKQTLLPTTSHSQDINLKKQITVNKKKNQLHNLRDQLSFAFPYDSQAPIPQRVWQTWKVGADDKNFPSSFRTYQKTWSGSYSPDYQYSLISDDSIIPFLENLYAPVPIVIQAFKLMPGNILKADFLRYLLLFARGGIYSDMDTMLLKPIDSWPSQNKSWLNNIIDLNKPIPYKNSKPSLLSSDEISHQPGLVIGIEADPDRDDWSEWYARRIQFCQWTIQAKPGHPILRELILNITATTLASVQNPGVPVSEMIDPRFEEDYNVNYRHKRRHDETYKHSELKNNKNVDGSDIMNWTGPGIFSDIIFEYMNNVLRYNSDILLINPNLNKNDEEGSESATTPAKDVDNDTLSKSTRKFYKKISESLQSSNSMPWEFFSFLKEPVIVDDVMVLPITSFSPDVGQMGAQSSDDKMAFVKHMFSGSWKEDADKNAGHK.

Over 1 to 15 the chain is Cytoplasmic; sequence MSRKLSHLIATRKSK. The helical; Signal-anchor for type II membrane protein transmembrane segment at 16–30 threads the bilayer; that stretch reads TIVVTVLLIYSLLTF. Residues 31 to 480 lie on the Lumenal side of the membrane; the sequence is HLSNKRLLSQ…EDADKNAGHK (450 aa). Positions 187-189 match the DXD motif motif; it reads DMD. N-linked (GlcNAc...) asparagine glycosylation is found at Asn-203, Asn-281, Asn-341, and Asn-393.

The protein belongs to the glycosyltransferase 32 family. It depends on Mn(2+) as a cofactor. Glycosylated.

The protein resides in the endoplasmic reticulum membrane. It is found in the golgi apparatus membrane. The enzyme catalyses Transfers an alpha-D-mannosyl residue from GDP-mannose into lipid-linked oligosaccharide, forming an alpha-(1-&gt;6)-D-mannosyl-D-mannose linkage.. Functionally, mannosyltransferase involved in outer chain elongation of asparagine-linked oligosaccharides of the type Man(9)GlcNAc(2). Adds the first alpha-1,6-mannose to the Man(8)GlcNAc(2) and Man(9)GlcNAc(2), but not Man(5)GlcNAc(2), endoplasmic reticulum intermediates. Represents the first enzymatic event required for synthesis of outer chain mannose linkages on yeast secretory proteins. Also has the potential to transfer a second alpha-1,6-mannose to the Man(8)GlcNAc(2) core oligosaccharide. The protein is Initiation-specific alpha-1,6-mannosyltransferase of Saccharomyces cerevisiae (strain ATCC 204508 / S288c) (Baker's yeast).